A 98-amino-acid chain; its full sequence is Sm-like protein LSM8 (98 aa).

A Sm domain is found at 2-78 (AATTGLETLV…IGVIGELDEE (77 aa)).

It belongs to the snRNP Sm proteins family. As to quaternary structure, component of the heptameric LSM2-LSM8 complex that forms a seven-membered ring structure with a donut shape. The LSM subunits are arranged in the order LSM8, LSM2, LSM3, LSM6, LSM5, LSM7 and LSM4. LSM8 subunit interacts only with its two neighboring subunits, LSM2 and LSM4. Interacts with the prefoldin co-chaperone subunits PFD1, PFD2, PFD3, PFD4, PFD5 and PFD6. In terms of tissue distribution, expressed in roots, leaves, stems, flowers and siliques.

The protein localises to the nucleus. Its function is as follows. Component of the nuclear LSM2-LSM8 complex which is involved splicing nuclear mRNAs. LSM2-LSM8 binds directly to the U6 small nuclear RNAs (snRNAs). LSM8 is essential for the formation of the nuclear LSM2-LSM8 complex involved in the accurate splicing of selected development-related mRNAs through the stabilization of the spliceosomal U6 snRNA. Plays a critical role in the regulation of development-related gene expression. In Arabidopsis thaliana (Mouse-ear cress), this protein is Sm-like protein LSM8.